A 91-amino-acid polypeptide reads, in one-letter code: DNA-directed RNA polymerase subunit omega (91 aa).

It belongs to the RNA polymerase subunit omega family. In terms of assembly, the RNAP catalytic core consists of 2 alpha, 1 beta, 1 beta' and 1 omega subunit. When a sigma factor is associated with the core the holoenzyme is formed, which can initiate transcription.

It catalyses the reaction RNA(n) + a ribonucleoside 5'-triphosphate = RNA(n+1) + diphosphate. Functionally, promotes RNA polymerase assembly. Latches the N- and C-terminal regions of the beta' subunit thereby facilitating its interaction with the beta and alpha subunits. In Sodalis glossinidius (strain morsitans), this protein is DNA-directed RNA polymerase subunit omega.